The chain runs to 236 residues: Cell division protein FtsQ (236 aa).

Residues 1–14 (MWDNHQALNQVADW) lie on the Cytoplasmic side of the membrane. Residues 15–37 (LFTLAGLTTIYLMVQWTIHLPLL) traverse the membrane as a helical segment. In terms of domain architecture, POTRA spans 37-111 (LPLKEVHIRS…NGLDVVVEEH (75 aa)). Over 38–236 (PLKEVHIRSN…VSGFAARGTR (199 aa)) the chain is Periplasmic.

Belongs to the FtsQ/DivIB family. FtsQ subfamily. As to quaternary structure, part of a complex composed of FtsB, FtsL and FtsQ.

It localises to the cell inner membrane. In terms of biological role, essential cell division protein. May link together the upstream cell division proteins, which are predominantly cytoplasmic, with the downstream cell division proteins, which are predominantly periplasmic. May control correct divisome assembly. In Nitrosospira multiformis (strain ATCC 25196 / NCIMB 11849 / C 71), this protein is Cell division protein FtsQ.